The following is a 415-amino-acid chain: Fructose-like permease IIC component (415 aa).

The Cytoplasmic segment spans residues 1–46 (MAIKKRSATVVPGASGAAAAVKNPQASKSSFWGELPQHVMSGISRM). The 376-residue stretch at 35–410 (LPQHVMSGIS…RLMMFRKGKL (376 aa)) folds into the PTS EIIC type-2 domain. Residues 47–67 (VPTLIMGGVILAFSQLIAYSW) form a helical membrane-spanning segment. Residues 68–101 (LKIPAEIGIMDALNSGKFSGFDLSLLKFAWLSQS) are Periplasmic-facing. A helical transmembrane segment spans residues 102–122 (FGGVLFGFAIPMFAAFVANSI). Residues 123 to 126 (GGKL) lie on the Cytoplasmic side of the membrane. A helical membrane pass occupies residues 127 to 147 (AFPAGFIGGLMSTQPTQLLNF). Over 148–157 (DPSTMQWATS) the chain is Periplasmic. A helical membrane pass occupies residues 158–178 (SPVPSTFIGALIISIVAGYLV). Residues 179–197 (KWMNQKIQLPDFLLAFKTT) lie on the Cytoplasmic side of the membrane. The helical transmembrane segment at 198 to 218 (FLLPILSAIFVMLAMYYVITP) threads the bilayer. The Periplasmic portion of the chain corresponds to 219 to 237 (FGGWINGGIRTVLTAAGEK). The helical transmembrane segment at 238-258 (GALMYAMGIAAATAIDLGGPI) threads the bilayer. Topologically, residues 259 to 276 (NKAAGFVAFSFTTDHVLP) are cytoplasmic. A helical transmembrane segment spans residues 277-297 (VTARSIAIVIPPIGLGLATII). The Periplasmic portion of the chain corresponds to 298–318 (DRRLTGKRLFNAQLYPQGKTA). The helical transmembrane segment at 319–339 (MFLAFMGISEGAIPFALESPI) threads the bilayer. At 340–341 (TA) the chain is on the cytoplasmic side. A helical transmembrane segment spans residues 342 to 362 (IPSYMVGAIVGSTAAVWLGAV). Residues 363–378 (QWFPESAIWAWPLVTN) are Periplasmic-facing. The helical transmembrane segment at 379 to 399 (LGVYMAGIALGAVITALMVVF) threads the bilayer. Over 400-415 (LRLMMFRKGKLLIDSL) the chain is Cytoplasmic.

Its subcellular location is the cell inner membrane. Functionally, the phosphoenolpyruvate-dependent sugar phosphotransferase system (PTS), a major carbohydrate active -transport system, catalyzes the phosphorylation of incoming sugar substrates concomitant with their translocation across the cell membrane. In Escherichia coli O157:H7, this protein is Fructose-like permease IIC component (fryC).